The primary structure comprises 258 residues: Protein T1 (258 aa).

The first 17 residues, 1–17, serve as a signal peptide directing secretion; that stretch reads MRRLCIILLVYVYATFA. Asparagine 67, asparagine 151, and asparagine 172 each carry an N-linked (GlcNAc...) asparagine; by host glycan.

This sequence belongs to the poxviruses A41 family.

The chain is Protein T1 from Rabbit fibroma virus (strain Kasza) (RFV).